We begin with the raw amino-acid sequence, 198 residues long: Ribonuclease HII (198 aa).

Positions 10 to 198 (QLVAGVDEVG…PVKRALGLAS (189 aa)) constitute an RNase H type-2 domain. Residues aspartate 16, glutamate 17, and aspartate 108 each contribute to the a divalent metal cation site.

Belongs to the RNase HII family. Mn(2+) is required as a cofactor. It depends on Mg(2+) as a cofactor.

The protein localises to the cytoplasm. It catalyses the reaction Endonucleolytic cleavage to 5'-phosphomonoester.. Its function is as follows. Endonuclease that specifically degrades the RNA of RNA-DNA hybrids. In Escherichia coli O81 (strain ED1a), this protein is Ribonuclease HII.